A 302-amino-acid chain; its full sequence is Putative F-box protein At1g32420 (302 aa).

Over residues 1 to 10 (MKRGNEENNH) the composition is skewed to basic and acidic residues. The segment at 1 to 27 (MKRGNEENNHKTSSSSSTQRLSRRKIS) is disordered. Residues 31 to 78 (KSGNVNIPLDLTVEILKKLPAKSLLRFQCVSKQWLSIISSRRDFIDSI) enclose the F-box domain.

This Arabidopsis thaliana (Mouse-ear cress) protein is Putative F-box protein At1g32420.